The chain runs to 159 residues: Small ribosomal subunit protein uS9 (159 aa).

It belongs to the universal ribosomal protein uS9 family.

The protein is Small ribosomal subunit protein uS9 of Beijerinckia indica subsp. indica (strain ATCC 9039 / DSM 1715 / NCIMB 8712).